Reading from the N-terminus, the 323-residue chain is D-alanine--D-alanine ligase (323 aa).

Positions 120-319 constitute an ATP-grasp domain; that stretch reads LSVLKPYGIK…LEDLFTNAIE (200 aa). Residue 148 to 203 participates in ATP binding; it reads VKKVGLPCFVKPNKAGSSFGISKVKSEAELPIAIEVAYKEDNEIIIESFLDGTEVS. Positions 274, 286, and 288 each coordinate Mg(2+).

This sequence belongs to the D-alanine--D-alanine ligase family. Mg(2+) serves as cofactor. Requires Mn(2+) as cofactor.

It is found in the cytoplasm. It carries out the reaction 2 D-alanine + ATP = D-alanyl-D-alanine + ADP + phosphate + H(+). The protein operates within cell wall biogenesis; peptidoglycan biosynthesis. In terms of biological role, cell wall formation. The sequence is that of D-alanine--D-alanine ligase from Flavobacterium johnsoniae (strain ATCC 17061 / DSM 2064 / JCM 8514 / BCRC 14874 / CCUG 350202 / NBRC 14942 / NCIMB 11054 / UW101) (Cytophaga johnsonae).